Consider the following 94-residue polypeptide: UPF0381 protein YfcZ (94 aa).

Belongs to the UPF0381 family.

This chain is UPF0381 protein YfcZ (yfcZ), found in Escherichia coli O6:H1 (strain CFT073 / ATCC 700928 / UPEC).